A 353-amino-acid polypeptide reads, in one-letter code: tRNA N6-adenosine threonylcarbamoyltransferase (353 aa).

Positions 109 and 113 each coordinate Fe cation. Substrate is bound by residues 136–140, Asp169, Gly182, Asp186, and Asn284; that span reads TVSGG. Asp312 contacts Fe cation.

This sequence belongs to the KAE1 / TsaD family. The cofactor is Fe(2+).

The protein resides in the cytoplasm. The catalysed reaction is L-threonylcarbamoyladenylate + adenosine(37) in tRNA = N(6)-L-threonylcarbamoyladenosine(37) in tRNA + AMP + H(+). Functionally, required for the formation of a threonylcarbamoyl group on adenosine at position 37 (t(6)A37) in tRNAs that read codons beginning with adenine. Is involved in the transfer of the threonylcarbamoyl moiety of threonylcarbamoyl-AMP (TC-AMP) to the N6 group of A37, together with TsaE and TsaB. TsaD likely plays a direct catalytic role in this reaction. The sequence is that of tRNA N6-adenosine threonylcarbamoyltransferase from Chlorobium limicola (strain DSM 245 / NBRC 103803 / 6330).